We begin with the raw amino-acid sequence, 302 residues long: N-acetyl-D-glucosamine kinase (302 aa).

ATP is bound by residues 4–11 (GFDIGGTK) and 133–139 (GGGGLVL). Zn(2+)-binding residues include His156, Cys176, Cys178, and Cys183.

The protein belongs to the ROK (NagC/XylR) family. NagK subfamily.

The catalysed reaction is N-acetyl-D-glucosamine + ATP = N-acetyl-D-glucosamine 6-phosphate + ADP + H(+). Its pathway is cell wall biogenesis; peptidoglycan recycling. In terms of biological role, catalyzes the phosphorylation of N-acetyl-D-glucosamine (GlcNAc) derived from cell-wall degradation, yielding GlcNAc-6-P. This chain is N-acetyl-D-glucosamine kinase, found in Salmonella typhi.